The primary structure comprises 487 residues: Glycogen synthase (487 aa).

Residue Lys23 participates in ADP-alpha-D-glucose binding.

This sequence belongs to the glycosyltransferase 1 family. Bacterial/plant glycogen synthase subfamily.

The enzyme catalyses [(1-&gt;4)-alpha-D-glucosyl](n) + ADP-alpha-D-glucose = [(1-&gt;4)-alpha-D-glucosyl](n+1) + ADP + H(+). The protein operates within glycan biosynthesis; glycogen biosynthesis. Functionally, synthesizes alpha-1,4-glucan chains using ADP-glucose. The chain is Glycogen synthase from Pseudomonas fluorescens (strain Pf0-1).